Consider the following 1758-residue polypeptide: Collagen alpha-2(IV) chain (1758 aa).

The signal sequence occupies residues 1–26 (MKQRAALGPVLRLAILALLAVSYVQS). The 7S domain stretch occupies residues 27–42 (QATCRDCSNRGCFCVG). The interval 42–1527 (GEKGSMGAPG…PGAPGAAGPA (1486 aa)) is triple-helical region. Residues 47-62 (MGAPGPQGPPGTQGIR) are compositionally biased toward low complexity. Disordered stretches follow at residues 47–943 (MGAP…GAPG), 955–1304 (GVPG…GLPG), 1316–1339 (GFPG…DGLP), and 1367–1525 (GFPG…GAAG). Residues 102 to 111 (GNDGGNGRPG) show a composition bias toward gly residues. Residues 134 to 149 (PGRPGPPGMPGFPGPP) show a composition bias toward pro residues. Basic and acidic residues predominate over residues 189 to 198 (YPGEKGDRGD). Residues 224–234 (PKGDPGDLGSV) show a composition bias toward low complexity. A glycan (O-linked (Xyl...) (glycosaminoglycan) serine) is linked at Ser248. Over residues 258–267 (PGEKGDKGEP) the composition is skewed to basic and acidic residues. Positions 268–283 (GEGGQRGYPGNGGLSG) are enriched in gly residues. Residues 367 to 382 (PGPPGLPGRPGNPGPP) show a composition bias toward pro residues. Over residues 398-407 (GNTGGPGLPG) the composition is skewed to gly residues. Low complexity-rich tracts occupy residues 408 to 417 (YPGNEGLPGP) and 429 to 439 (APGVSGPSGIP). Over residues 464 to 479 (KDGKPGLDGAPGRKGE) the composition is skewed to basic and acidic residues. 2 stretches are compositionally biased toward low complexity: residues 495 to 509 (GLPG…PGPN) and 568 to 584 (PVGD…AGRP). The span at 638-648 (PSGPVGPPGAP) shows a compositional bias: pro residues. 3 stretches are compositionally biased toward gly residues: residues 693-702 (GAKGDGGLPG), 737-746 (GTKGEGGYPG), and 782-791 (GDKGFGGVPG). Residues 839-858 (LPGLPGTPGLEGQRGFPGAP) show a composition bias toward low complexity. Positions 859-868 (GLKGGDGLPG) are enriched in gly residues. The segment covering 929 to 938 (APGQSGAPGL) has biased composition (low complexity). Residues 958 to 967 (GFKGDGGLPG) show a composition bias toward gly residues. Over residues 968–980 (LPGLNGPKGEPGV) the composition is skewed to low complexity. The span at 988–997 (GMKGNGGLPG) shows a compositional bias: gly residues. A compositionally biased stretch (low complexity) spans 1040–1056 (LPGQPGLRGPQGPSGLP). Residues 1194–1203 (GLPGLGGEKG) show a composition bias toward gly residues. Positions 1237–1250 (FPGQPGQEGLPGLS) are enriched in low complexity. Residues 1251-1260 (GEKGMGGLPG) show a composition bias toward gly residues. Residues 1373–1382 (GLKGEGGLPG) show a composition bias toward gly residues. 2 stretches are compositionally biased toward low complexity: residues 1413–1425 (LPGR…ADGP) and 1433–1454 (GPQN…APGL). Gly residues-rich tracts occupy residues 1492 to 1501 (GEKGMGGLPG) and 1507 to 1516 (GQPGGPGAPG). Residues 1531 to 1754 (GFVLVKHSQT…SRCQVCVKST (224 aa)) form the Collagen IV NC1 domain. Disulfide bonds link Cys1546–Cys1635, Cys1579–Cys1632, Cys1591–Cys1597, Cys1654–Cys1750, Cys1688–Cys1747, and Cys1700–Cys1707.

This sequence belongs to the type IV collagen family. As to quaternary structure, trimers of two alpha 1(IV) and one alpha 2(IV) chain. Type IV collagen forms a mesh-like network linked through intermolecular interactions between 7S domains and between NC1 domains. Prolines at the third position of the tripeptide repeating unit (G-X-Y) are hydroxylated in some or all of the chains. Post-translationally, type IV collagens contain numerous cysteine residues which are involved in inter- and intramolecular disulfide bonding. 12 of these, located in the NC1 domain, are conserved in all known type IV collagens. In terms of processing, the trimeric structure of the NC1 domains is stabilized by covalent bonds between Lys and Met residues. Localizes to the basement membrane between distal tip cells and the germline. Localizes to the intestinal basement membrane.

Its subcellular location is the secreted. The protein localises to the extracellular space. It localises to the extracellular matrix. The protein resides in the basement membrane. Collagen type IV is specific for basement membranes. Together with fbl-1 and downstream of metalloprotease mig-17, recruits nidogen nid-1 to the gonad basement membrane thereby probably inducing basement membrane remodeling required for the directional migration of distal tip cells. Required to restrict presynaptic growth at the neuromuscular junctions in late larval stage and in adult motor neurons. Vital for embryonic development. The protein is Collagen alpha-2(IV) chain of Caenorhabditis elegans.